We begin with the raw amino-acid sequence, 577 residues long: NKAP family protein UM04995 (577 aa).

A disordered region spans residues 1 to 479 (MPTLAERLGS…YGGALLPGEG (479 aa)). Residues 20–31 (KSSHDREQELRS) show a composition bias toward basic and acidic residues. The span at 36–49 (SKQTSRNTAHQDLA) shows a compositional bias: polar residues. The span at 50–60 (SSERRSIDREL) shows a compositional bias: basic and acidic residues. The segment covering 70 to 89 (SPLSSPQNGSSPRRQRGSPS) has biased composition (low complexity). Basic and acidic residues-rich tracts occupy residues 127–163 (PRED…DSRR), 170–193 (SGDR…REAP), and 265–297 (DSSS…DKHH). Composition is skewed to basic residues over residues 298-316 (SSSR…RRSS) and 325-336 (SRHRHTRSSRSH). The span at 340–350 (DDDDDDDEDVD) shows a compositional bias: acidic residues. A compositionally biased stretch (basic and acidic residues) spans 363-385 (KVSDGSDSGRSESETDSDSDARS). A compositionally biased stretch (basic residues) spans 386–395 (SRHRRRHHKS). Basic and acidic residues-rich tracts occupy residues 396 to 408 (DRSS…ESEK) and 417 to 439 (SESE…RRDS). The stretch at 529-570 (RKENQVISAEEKRTMLRLQAEEKAKKEREIVSQFKELVDTLQ) forms a coiled coil.

It belongs to the NKAP family.

This chain is NKAP family protein UM04995, found in Mycosarcoma maydis (Corn smut fungus).